The sequence spans 98 residues: Small proline-rich protein 2B (98 aa).

Repeat copies occupy residues 21 to 29 (PKCPEPCPP), 30 to 38 (PKCPEPCPP), 39 to 47 (PVCCEPCPP), 48 to 56 (PKCPEPCPP), and 57 to 65 (PVCCEPCPP). The tract at residues 21–65 (PKCPEPCPPPKCPEPCPPPVCCEPCPPPKCPEPCPPPVCCEPCPP) is 5 X 9 AA approximate tandem repeats.

The protein belongs to the cornifin (SPRR) family. In terms of tissue distribution, expressed in uterus.

Its subcellular location is the cytoplasm. Functionally, cross-linked envelope protein of keratinocytes. It is a keratinocyte protein that first appears in the cell cytosol, but ultimately becomes cross-linked to membrane proteins by transglutaminase. All that results in the formation of an insoluble envelope beneath the plasma membrane. This chain is Small proline-rich protein 2B (Sprr2b), found in Mus musculus (Mouse).